Here is a 548-residue protein sequence, read N- to C-terminus: WEB family protein At1g12150 (548 aa).

Residues 71–544 (KEFMKIKQKL…ELQRWRQQEN (474 aa)) are a coiled coil. Over residues 430-448 (VREEMKMISQKQESKKQDE) the composition is skewed to basic and acidic residues. A disordered region spans residues 430–455 (VREEMKMISQKQESKKQDEESSGSKI).

This sequence belongs to the WEB family.

The polypeptide is WEB family protein At1g12150 (Arabidopsis thaliana (Mouse-ear cress)).